The sequence spans 254 residues: Trypsin (254 aa).

Positions 1 to 16 (MLRFIAVFALVNCALA) are cleaved as a signal peptide. Residues 17–26 (GTLPNDLDGR) constitute a propeptide, activation peptide. The Peptidase S1 domain maps to 27-252 (IVNGVDTTIE…VRSWIEKTAK (226 aa)). Cys-53 and Cys-69 form a disulfide bridge. Active-site charge relay system residues include His-68 and Asp-113. Disulfide bonds link Cys-154/Cys-158, Cys-178/Cys-195, and Cys-204/Cys-228. Ser-208 (charge relay system) is an active-site residue.

This sequence belongs to the peptidase S1 family.

Its subcellular location is the secreted. It is found in the extracellular space. The enzyme catalyses Preferential cleavage: Arg-|-Xaa, Lys-|-Xaa.. In terms of biological role, involved in digestion of a protein meal. In Sarcophaga bullata (Grey flesh fly), this protein is Trypsin.